A 156-amino-acid chain; its full sequence is Small ribosomal subunit protein uS7 (156 aa).

The protein belongs to the universal ribosomal protein uS7 family. In terms of assembly, part of the 30S ribosomal subunit. Contacts proteins S9 and S11.

One of the primary rRNA binding proteins, it binds directly to 16S rRNA where it nucleates assembly of the head domain of the 30S subunit. Is located at the subunit interface close to the decoding center, probably blocks exit of the E-site tRNA. The chain is Small ribosomal subunit protein uS7 from Methylorubrum extorquens (strain CM4 / NCIMB 13688) (Methylobacterium extorquens).